The chain runs to 312 residues: DNA-directed RNA polymerase subunit alpha (312 aa).

The alpha N-terminal domain (alpha-NTD) stretch occupies residues 1–226 (MIEFEKPTIT…EHLGLFTDLT (226 aa)). Positions 242–312 (SDDRMLDRTI…DLGLGLKKDK (71 aa)) are alpha C-terminal domain (alpha-CTD).

The protein belongs to the RNA polymerase alpha chain family. In terms of assembly, homodimer. The RNAP catalytic core consists of 2 alpha, 1 beta, 1 beta' and 1 omega subunit. When a sigma factor is associated with the core the holoenzyme is formed, which can initiate transcription.

The enzyme catalyses RNA(n) + a ribonucleoside 5'-triphosphate = RNA(n+1) + diphosphate. Its function is as follows. DNA-dependent RNA polymerase catalyzes the transcription of DNA into RNA using the four ribonucleoside triphosphates as substrates. This is DNA-directed RNA polymerase subunit alpha from Streptococcus suis (strain 98HAH33).